An 833-amino-acid chain; its full sequence is Serine-rich coiled-coil domain-containing protein 2 (833 aa).

The interval 178–208 is disordered; sequence NRSSGNVQKPRVNSCASRSSSGESLAQSPDN. The segment covering 191 to 208 has biased composition (polar residues); it reads SCASRSSSGESLAQSPDN. Serine 222 carries the phosphoserine modification. Disordered stretches follow at residues 321 to 345, 424 to 452, 478 to 508, and 602 to 631; these read LLKS…PADM, NRTR…FDSP, KHTS…SSDG, and DHYH…ESPL. The residue at position 451 (serine 451) is a Phosphoserine. The segment covering 496–506 has biased composition (low complexity); it reads SSFELSPSDSS. The segment covering 606–615 has biased composition (basic residues); the sequence is LSHPGHYHHH. Residues 711–747 adopt a coiled-coil conformation; the sequence is DQIYKNEDLLNEITQLKEEIKKKDEKIQLLEQQLATR. The tract at residues 789 to 833 is disordered; that stretch reads FQGMPRTVPPHRRQTSSTTAFQQPSQIYRPRPGKTNKATTYRGPQ. The segment covering 803 to 814 has biased composition (polar residues); sequence TSSTTAFQQPSQ.

The protein belongs to the CCSER family. As to expression, expressed in brain (at protein level).

The protein localises to the cytoplasm. It localises to the cytoskeleton. Microtubule-binding protein which might play a role in microtubule bundling. In Mus musculus (Mouse), this protein is Serine-rich coiled-coil domain-containing protein 2 (Ccser2).